Consider the following 127-residue polypeptide: UPF0102 protein SYNAS_23220 (127 aa).

It belongs to the UPF0102 family.

This chain is UPF0102 protein SYNAS_23220, found in Syntrophus aciditrophicus (strain SB).